The chain runs to 411 residues: Calmodulin-binding receptor-like cytoplasmic kinase 2 (411 aa).

Disordered regions lie at residues 1 to 44 and 66 to 99; these read MPSR…DTTT and SNYIDNSKSSSDNNIRSRRSSTGSSSVQRSYGNA. Composition is skewed to low complexity over residues 16–44 and 66–95; these read TTSSNYSNTTFTDRSFPTTPARTSTDTTT and SNYIDNSKSSSDNNIRSRRSSTGSSSVQRS. Phosphothreonine is present on T108. The Protein kinase domain occupies 119–398; the sequence is FSPSFRIGQG…MKKCSEILWG (280 aa). Residues 125 to 133 and K147 each bind ATP; that span reads IGQGGFGTV. The interval 134–159 is caM-binding; it reads YKVKLRDGKTFAVKRAKKSMHDDRQG. The active-site Proton acceptor is D247. S251 and S283 each carry phosphoserine. Residues T284 and T289 each carry the phosphothreonine modification. Position 297 is a phosphotyrosine (Y297).

The protein belongs to the protein kinase superfamily. Ser/Thr protein kinase family. Interacts with calmodulin (CaM) in a Ca(2+)-dependent manner.

The protein resides in the cytoplasm. It carries out the reaction L-seryl-[protein] + ATP = O-phospho-L-seryl-[protein] + ADP + H(+). The catalysed reaction is L-threonyl-[protein] + ATP = O-phospho-L-threonyl-[protein] + ADP + H(+). The sequence is that of Calmodulin-binding receptor-like cytoplasmic kinase 2 (CRCK2) from Arabidopsis thaliana (Mouse-ear cress).